The primary structure comprises 107 residues: Large ribosomal subunit protein uL24 (107 aa).

Belongs to the universal ribosomal protein uL24 family. Part of the 50S ribosomal subunit.

Its function is as follows. One of two assembly initiator proteins, it binds directly to the 5'-end of the 23S rRNA, where it nucleates assembly of the 50S subunit. One of the proteins that surrounds the polypeptide exit tunnel on the outside of the subunit. The chain is Large ribosomal subunit protein uL24 from Nitratidesulfovibrio vulgaris (strain DSM 19637 / Miyazaki F) (Desulfovibrio vulgaris).